Here is a 118-residue protein sequence, read N- to C-terminus: Large ribosomal subunit protein uL18 (118 aa).

The interval 1 to 24 (MISKPDKNKIRQKRHRRVRGKLSG) is disordered. Residues 10-20 (IRQKRHRRVRG) show a composition bias toward basic residues.

The protein belongs to the universal ribosomal protein uL18 family. In terms of assembly, part of the 50S ribosomal subunit; part of the 5S rRNA/L5/L18/L25 subcomplex. Contacts the 5S and 23S rRNAs.

Functionally, this is one of the proteins that bind and probably mediate the attachment of the 5S RNA into the large ribosomal subunit, where it forms part of the central protuberance. The polypeptide is Large ribosomal subunit protein uL18 (Streptococcus agalactiae serotype III (strain NEM316)).